We begin with the raw amino-acid sequence, 331 residues long: FMRFamide-related neuropeptides (331 aa).

The first 25 residues, 1–25 (MRCWSPCSLLVVIVIYCLSSHTSEA), serve as a signal peptide directing secretion. The propeptide occupies 26-65 (FDLAQACVESQRLSLLPICDTIFAVQQEGVQQSADDGMRS). Phenylalanine amide is present on residues phenylalanine 71 and phenylalanine 83. Positions 86 to 94 (NVPDLPFED) are excised as a propeptide. The residue at position 100 (phenylalanine 100) is a Phenylalanine amide. Residues 103–168 (AAPQLDELLK…YIDDVEDSDV (66 aa)) constitute a propeptide that is removed on maturation. Residues 122–158 (QKADETSVRRKRSTDAAPQNNAENPEQKNDSAKITKR) are disordered. The span at 146 to 158 (PEQKNDSAKITKR) shows a compositional bias: basic and acidic residues. Residues phenylalanine 174 and phenylalanine 181 each carry the phenylalanine amide modification. Residues 184–194 (NPSDVGNKLTE) constitute a propeptide that is removed on maturation. Position 200 is a phenylalanine amide (phenylalanine 200). Residues 203-205 (DPE) constitute a propeptide that is removed on maturation. Residue phenylalanine 211 is modified to Phenylalanine amide. Residues 214-216 (SDD) constitute a propeptide that is removed on maturation. Phenylalanine 222 carries the phenylalanine amide modification. The propeptide occupies 225 to 236 (NPSDAEDELEED). Phenylalanine 242 is modified (phenylalanine amide). Residues 245 to 254 (GGEDDEEEAE) constitute a propeptide that is removed on maturation. Phenylalanine amide is present on phenylalanine 260. Residues 263–265 (DPE) constitute a propeptide that is removed on maturation. Phenylalanine 271 bears the Phenylalanine amide mark. Positions 274–277 (SGED) are excised as a propeptide. A compositionally biased stretch (basic and acidic residues) spans 279-296 (RFMRFGRNPDEQEADKRF). Residues 279–310 (RFMRFGRNPDEQEADKRFMRFGRGGEDDEVST) form a disordered region. At phenylalanine 283 the chain carries Phenylalanine amide. Positions 286 to 293 (NPDEQEAD) are excised as a propeptide. Phenylalanine 299 is modified (phenylalanine amide). Positions 302–312 (GGEDDEVSTED) are excised as a propeptide. At phenylalanine 318 the chain carries Phenylalanine amide. Residues 321 to 331 (SADKCKGCLEG) constitute a propeptide that is removed on maturation.

This sequence belongs to the FARP (FMRFamide related peptide) family.

It localises to the secreted. Excitatory neurotransmitters that directly modulate chromatophore function by activating chromatophore expansion at the chromatophore neuromuscular junction. In Doryteuthis opalescens (California market squid), this protein is FMRFamide-related neuropeptides.